Consider the following 487-residue polypeptide: Zinc finger protein 345 (487 aa).

C2H2-type zinc fingers lie at residues 62–84 (LECK…QRIH), 90–112 (YECK…QRIH), 118–140 (YECN…QRIH), 146–168 (YECK…QIIH), 174–196 (YECK…HRIH), 202–224 (YECK…RRVH), 230–252 (YECK…QRIH), 258–280 (YICN…QRIH), 286–308 (YVCK…QRIH), 314–336 (YECK…QRMH), 342–364 (YECK…QRIH), 370–392 (YECK…QLIH), 398–420 (YECR…QRIH), 426–448 (YECK…QRMH), and 454–476 (YECK…KKNH).

Belongs to the krueppel C2H2-type zinc-finger protein family.

It localises to the nucleus. Functionally, may be involved in transcriptional regulation. In Bos taurus (Bovine), this protein is Zinc finger protein 345 (ZNF345).